The sequence spans 1293 residues: Phosphoribosylformylglycinamidine synthase (1293 aa).

ATP-binding positions include 305 to 316 (GAATGSGGEIRD) and A676. The segment at 305 to 327 (GAATGSGGEIRDEGATGRGSKPK) is disordered. Mg(2+)-binding residues include D677, E716, N720, and D884. Residue S886 participates in ATP binding. Positions 1040–1293 (MAILREQGVN…MFRNARVNLG (254 aa)) constitute a Glutamine amidotransferase type-1 domain. The active-site Nucleophile is C1133. Residues H1258 and E1260 contribute to the active site.

This sequence in the N-terminal section; belongs to the FGAMS family. Monomer.

Its subcellular location is the cytoplasm. It catalyses the reaction N(2)-formyl-N(1)-(5-phospho-beta-D-ribosyl)glycinamide + L-glutamine + ATP + H2O = 2-formamido-N(1)-(5-O-phospho-beta-D-ribosyl)acetamidine + L-glutamate + ADP + phosphate + H(+). It functions in the pathway purine metabolism; IMP biosynthesis via de novo pathway; 5-amino-1-(5-phospho-D-ribosyl)imidazole from N(2)-formyl-N(1)-(5-phospho-D-ribosyl)glycinamide: step 1/2. Its function is as follows. Phosphoribosylformylglycinamidine synthase involved in the purines biosynthetic pathway. Catalyzes the ATP-dependent conversion of formylglycinamide ribonucleotide (FGAR) and glutamine to yield formylglycinamidine ribonucleotide (FGAM) and glutamate. The polypeptide is Phosphoribosylformylglycinamidine synthase (Shewanella oneidensis (strain ATCC 700550 / JCM 31522 / CIP 106686 / LMG 19005 / NCIMB 14063 / MR-1)).